The primary structure comprises 199 residues: Cell division protein SepF (199 aa).

The disordered stretch occupies residues 15 to 79 (TEDGDETEVQ…PQPQQKSSTE (65 aa)).

It belongs to the SepF family. Homodimer. Interacts with FtsZ.

The protein resides in the cytoplasm. Its function is as follows. Cell division protein that is part of the divisome complex and is recruited early to the Z-ring. Probably stimulates Z-ring formation, perhaps through the cross-linking of FtsZ protofilaments. Its function overlaps with FtsA. In Streptococcus sanguinis (strain SK36), this protein is Cell division protein SepF.